The chain runs to 129 residues: Glycine cleavage system H protein (129 aa).

A Lipoyl-binding domain is found at 24 to 106; the sequence is SYTVGISEHA…YGDGWFFRIM (83 aa). Lys65 carries the N6-lipoyllysine modification.

This sequence belongs to the GcvH family. In terms of assembly, the glycine cleavage system is composed of four proteins: P, T, L and H. Requires (R)-lipoate as cofactor.

In terms of biological role, the glycine cleavage system catalyzes the degradation of glycine. The H protein shuttles the methylamine group of glycine from the P protein to the T protein. The sequence is that of Glycine cleavage system H protein from Shewanella loihica (strain ATCC BAA-1088 / PV-4).